Reading from the N-terminus, the 271-residue chain is ATP synthase subunit a (271 aa).

5 helical membrane-spanning segments follow: residues 31–51 (WDTILTSVIAGVIVVGLGLYM), 89–109 (FVAPMAVTLFVYILLCNWIGV), 124–144 (DINLTLTLALVVIVPMHIVSL), 186–206 (IFSGAIMVSLLALMPPYVLWL), and 216–236 (LGVGVIQAFIFALLTILYYAF). Positions 247-271 (DEHADGGDSSSRQASPTPLPAGQVR) are disordered.

Belongs to the ATPase A chain family. In terms of assembly, F-type ATPases have 2 components, CF(1) - the catalytic core - and CF(0) - the membrane proton channel. CF(1) has five subunits: alpha(3), beta(3), gamma(1), delta(1), epsilon(1). CF(0) has three main subunits: a(1), b(2) and c(9-12). The alpha and beta chains form an alternating ring which encloses part of the gamma chain. CF(1) is attached to CF(0) by a central stalk formed by the gamma and epsilon chains, while a peripheral stalk is formed by the delta and b chains.

The protein localises to the cell membrane. Key component of the proton channel; it plays a direct role in the translocation of protons across the membrane. This chain is ATP synthase subunit a, found in Acidothermus cellulolyticus (strain ATCC 43068 / DSM 8971 / 11B).